The sequence spans 213 residues: MARKTAAEAEETRQRIIDAALEVFVAQGVSDATLDQIARKAGVTRGAVYWHFNGKLEVLQAVLASRQHPLELDFTPDLGIERSWEAVVVAMLDAVHSPQSKQFSEILIYQGLDESGLIHNRMVQASDRFLQYIHQVLRHAVTQGELPINLDLQTSIGVFKGLITGLLYEGLRSKDQQAQIIKVALGSFWALLREPPRFLLCEEAQIKQVKSFE.

An HTH tetR-type domain is found at 10–70 (EETRQRIIDA…AVLASRQHPL (61 aa)). The segment at residues 33–52 (TLDQIARKAGVTRGAVYWHF) is a DNA-binding region (H-T-H motif).

Its function is as follows. In conjunction with SrpS represses the srpABC operon. This chain is HTH-type transcriptional regulator SrpR (srpR), found in Pseudomonas putida (Arthrobacter siderocapsulatus).